Reading from the N-terminus, the 414-residue chain is Adenylosuccinate synthetase (414 aa).

GTP contacts are provided by residues 12–18 and 40–42; these read GDEGKGK and GHT. Asp13 serves as the catalytic Proton acceptor. The Mg(2+) site is built by Asp13 and Gly40. IMP contacts are provided by residues 13 to 16, 38 to 41, Thr124, Arg138, Gln216, Thr231, and Arg297; these read DEGK and NAGH. His41 serves as the catalytic Proton donor. 293 to 299 contacts substrate; the sequence is STTGRPR. GTP contacts are provided by residues Arg299, 325-327, and 403-405; these read KLD and STG.

It belongs to the adenylosuccinate synthetase family. In terms of assembly, homodimer. It depends on Mg(2+) as a cofactor.

It is found in the cytoplasm. It carries out the reaction IMP + L-aspartate + GTP = N(6)-(1,2-dicarboxyethyl)-AMP + GDP + phosphate + 2 H(+). Its pathway is purine metabolism; AMP biosynthesis via de novo pathway; AMP from IMP: step 1/2. Its function is as follows. Plays an important role in the de novo pathway of purine nucleotide biosynthesis. Catalyzes the first committed step in the biosynthesis of AMP from IMP. This is Adenylosuccinate synthetase from Hydrogenobaculum sp. (strain Y04AAS1).